A 509-amino-acid polypeptide reads, in one-letter code: GMP synthase [glutamine-hydrolyzing] (509 aa).

A Glutamine amidotransferase type-1 domain is found at 4–193 (NVLILDFGSQ…LVKIAQVPQN (190 aa)). The active-site Nucleophile is the C79. Catalysis depends on residues H167 and E169. Residues 194–384 (FTPNAFVSDM…LGIDAELLGR (191 aa)) enclose the GMPS ATP-PPase domain. Residue 221–227 (SGGVDST) participates in ATP binding.

Homodimer.

It carries out the reaction XMP + L-glutamine + ATP + H2O = GMP + L-glutamate + AMP + diphosphate + 2 H(+). The protein operates within purine metabolism; GMP biosynthesis; GMP from XMP (L-Gln route): step 1/1. Catalyzes the synthesis of GMP from XMP. The chain is GMP synthase [glutamine-hydrolyzing] from Flavobacterium psychrophilum (strain ATCC 49511 / DSM 21280 / CIP 103535 / JIP02/86).